The sequence spans 228 residues: Ribosomal RNA small subunit methyltransferase G (228 aa).

Residues Gly-89, Leu-94, 140–141, and Arg-159 each bind S-adenosyl-L-methionine; that span reads VE.

Belongs to the methyltransferase superfamily. RNA methyltransferase RsmG family.

It is found in the cytoplasm. It carries out the reaction guanosine(527) in 16S rRNA + S-adenosyl-L-methionine = N(7)-methylguanosine(527) in 16S rRNA + S-adenosyl-L-homocysteine. Functionally, specifically methylates the N7 position of guanine in position 527 of 16S rRNA. This is Ribosomal RNA small subunit methyltransferase G from Burkholderia multivorans (strain ATCC 17616 / 249).